The sequence spans 293 residues: Formamidopyrimidine-DNA glycosylase (293 aa).

Residue P2 is the Schiff-base intermediate with DNA of the active site. The Proton donor role is filled by E3. Catalysis depends on K58, which acts as the Proton donor; for beta-elimination activity. DNA-binding residues include H104, R127, and R170. The segment at S257–T293 adopts an FPG-type zinc-finger fold. The Proton donor; for delta-elimination activity role is filled by R283.

The protein belongs to the FPG family. In terms of assembly, monomer. Requires Zn(2+) as cofactor.

The enzyme catalyses Hydrolysis of DNA containing ring-opened 7-methylguanine residues, releasing 2,6-diamino-4-hydroxy-5-(N-methyl)formamidopyrimidine.. It carries out the reaction 2'-deoxyribonucleotide-(2'-deoxyribose 5'-phosphate)-2'-deoxyribonucleotide-DNA = a 3'-end 2'-deoxyribonucleotide-(2,3-dehydro-2,3-deoxyribose 5'-phosphate)-DNA + a 5'-end 5'-phospho-2'-deoxyribonucleoside-DNA + H(+). Functionally, involved in base excision repair of DNA damaged by oxidation or by mutagenic agents. Acts as a DNA glycosylase that recognizes and removes damaged bases. Has a preference for oxidized purines, such as 7,8-dihydro-8-oxoguanine (8-oxoG). Has AP (apurinic/apyrimidinic) lyase activity and introduces nicks in the DNA strand. Cleaves the DNA backbone by beta-delta elimination to generate a single-strand break at the site of the removed base with both 3'- and 5'-phosphates. The polypeptide is Formamidopyrimidine-DNA glycosylase (Brucella canis (strain ATCC 23365 / NCTC 10854 / RM-666)).